Reading from the N-terminus, the 219-residue chain is Thiamine-phosphate synthase (219 aa).

4-amino-2-methyl-5-(diphosphooxymethyl)pyrimidine contacts are provided by residues 44–48 (QFREK) and asparagine 79. 2 residues coordinate Mg(2+): aspartate 80 and aspartate 99. Serine 117 is a 4-amino-2-methyl-5-(diphosphooxymethyl)pyrimidine binding site. 143 to 145 (TST) is a 2-[(2R,5Z)-2-carboxy-4-methylthiazol-5(2H)-ylidene]ethyl phosphate binding site. Lysine 146 is a 4-amino-2-methyl-5-(diphosphooxymethyl)pyrimidine binding site. Residues glycine 175 and 195-196 (IS) each bind 2-[(2R,5Z)-2-carboxy-4-methylthiazol-5(2H)-ylidene]ethyl phosphate.

The protein belongs to the thiamine-phosphate synthase family. The cofactor is Mg(2+).

The enzyme catalyses 2-[(2R,5Z)-2-carboxy-4-methylthiazol-5(2H)-ylidene]ethyl phosphate + 4-amino-2-methyl-5-(diphosphooxymethyl)pyrimidine + 2 H(+) = thiamine phosphate + CO2 + diphosphate. The catalysed reaction is 2-(2-carboxy-4-methylthiazol-5-yl)ethyl phosphate + 4-amino-2-methyl-5-(diphosphooxymethyl)pyrimidine + 2 H(+) = thiamine phosphate + CO2 + diphosphate. It catalyses the reaction 4-methyl-5-(2-phosphooxyethyl)-thiazole + 4-amino-2-methyl-5-(diphosphooxymethyl)pyrimidine + H(+) = thiamine phosphate + diphosphate. It functions in the pathway cofactor biosynthesis; thiamine diphosphate biosynthesis; thiamine phosphate from 4-amino-2-methyl-5-diphosphomethylpyrimidine and 4-methyl-5-(2-phosphoethyl)-thiazole: step 1/1. Its function is as follows. Condenses 4-methyl-5-(beta-hydroxyethyl)thiazole monophosphate (THZ-P) and 2-methyl-4-amino-5-hydroxymethyl pyrimidine pyrophosphate (HMP-PP) to form thiamine monophosphate (TMP). The sequence is that of Thiamine-phosphate synthase from Bacillus anthracis (strain A0248).